A 204-amino-acid chain; its full sequence is Large ribosomal subunit protein eL15 (204 aa).

It belongs to the eukaryotic ribosomal protein eL15 family.

This Tetrahymena thermophila (strain SB210) protein is Large ribosomal subunit protein eL15 (RPL15).